Consider the following 302-residue polypeptide: MNIPLRIGGCASGPGCGDGEGSVQVATDPLLAIETAKVFAVYGKGGIGKSTTSSNLSAAFSKLGKRVLQIGCDPKHDSTFTLTKRFVPTVIDVLESVNFHAEELRAEDFIFEGYNGVMCVEAGGPPAGAGCGGYVVGQTVKLLKAHHLLEDTDVVIFDVLGDVVCGGFAAPLQFADRTLIVCANDFDSIFAMNRIVAAIASKAKNYKVRLGGVIANRSAELDQIDNYNNRVGLKTMAHFRDLDAIRRSRLKKSVIFEMDPSPEILAVQAEYMHLAETLWAGTEPLDAMPLKDREIFDLLGYD.

ATP is bound by residues 46-51 (GIGKST) and K75. A Mg(2+)-binding site is contributed by S50. C131 and C165 together coordinate [4Fe-4S] cluster. 216-217 (NR) contacts ATP.

Belongs to the NifH/BchL/ChlL family. In terms of assembly, homodimer. Protochlorophyllide reductase is composed of three subunits; BchL, BchN and BchB. The cofactor is [4Fe-4S] cluster.

It carries out the reaction chlorophyllide a + oxidized 2[4Fe-4S]-[ferredoxin] + 2 ADP + 2 phosphate = protochlorophyllide a + reduced 2[4Fe-4S]-[ferredoxin] + 2 ATP + 2 H2O. It participates in porphyrin-containing compound metabolism; bacteriochlorophyll biosynthesis (light-independent). Its function is as follows. Component of the dark-operative protochlorophyllide reductase (DPOR) that uses Mg-ATP and reduced ferredoxin to reduce ring D of protochlorophyllide (Pchlide) to form chlorophyllide a (Chlide). This reaction is light-independent. The L component serves as a unique electron donor to the NB-component of the complex, and binds Mg-ATP. This chain is Light-independent protochlorophyllide reductase iron-sulfur ATP-binding protein, found in Methylocella silvestris (strain DSM 15510 / CIP 108128 / LMG 27833 / NCIMB 13906 / BL2).